The sequence spans 360 residues: Peptide chain release factor 1 (360 aa).

Glutamine 235 is subject to N5-methylglutamine. The span at 284–293 shows a compositional bias: basic and acidic residues; that stretch reads QKRQQEEAST. A disordered region spans residues 284-305; that stretch reads QKRQQEEASTRRNLLGSGDRSD.

Belongs to the prokaryotic/mitochondrial release factor family. In terms of processing, methylated by PrmC. Methylation increases the termination efficiency of RF1.

The protein resides in the cytoplasm. Functionally, peptide chain release factor 1 directs the termination of translation in response to the peptide chain termination codons UAG and UAA. This Pectobacterium carotovorum subsp. carotovorum (strain PC1) protein is Peptide chain release factor 1.